A 241-amino-acid chain; its full sequence is Chloride intracellular channel protein 1 (241 aa).

Ala-2 is subject to N-acetylalanine. Positions 2–90 (AEEQPQVELF…EEFLEAVLCP (89 aa)) are required for insertion into the membrane. Lys-13 is subject to N6-acetyllysine. Residues 24 to 27 (CPFS) carry the G-site motif. Cysteines 24 and 59 form a disulfide. A helical transmembrane segment spans residues 26–46 (FSQRLFMVLWLKGVTFNVTTV). In terms of domain architecture, GST C-terminal spans 93–233 (YPKLAALNPE…PDDEEIELAY (141 aa)). Lys-119 is subject to N6-acetyllysine. A Phosphoserine modification is found at Ser-121. Position 131 is an N6-acetyllysine (Lys-131). Phosphoserine occurs at positions 156 and 211. At Tyr-233 the chain carries Phosphotyrosine.

The protein belongs to the chloride channel CLIC family. Monomer. Homodimer (in vitro). Interacts with TRAPPC2. Dimerization requires a conformation change that leads to the exposure of a large hydrophobic surface. In vivo, this may lead to membrane insertion. Expressed in neonatal and adult cardiomyocytes (at protein level).

Its subcellular location is the nucleus. The protein resides in the nucleus membrane. The protein localises to the cytoplasm. It localises to the cell membrane. It is found in the endoplasmic reticulum. It catalyses the reaction L-dehydroascorbate + 2 glutathione = glutathione disulfide + L-ascorbate. The enzyme catalyses chloride(in) = chloride(out). It carries out the reaction iodide(out) = iodide(in). The catalysed reaction is thiocyanate(in) = thiocyanate(out). It catalyses the reaction nitrate(in) = nitrate(out). The enzyme catalyses bromide(in) = bromide(out). It carries out the reaction fluoride(in) = fluoride(out). In terms of biological role, in the soluble state, catalyzes glutaredoxin-like thiol disulfide exchange reactions with reduced glutathione as electron donor. Reduces selenite and dehydroascorbate and may act as an antioxidant during oxidative stress response. Can insert into membranes and form voltage-dependent multi-ion conductive channels. Membrane insertion seems to be redox-regulated and may occur only under oxidizing conditions. Involved in regulation of the cell cycle. This is Chloride intracellular channel protein 1 from Rattus norvegicus (Rat).